The sequence spans 440 residues: Gamma-aminobutyric acid receptor subunit pi (440 aa).

The signal sequence occupies residues 1–23 (MSYSLYLAFLCLSLLTQRTCIQG). The Extracellular segment spans residues 24-241 (NQVNVEVSRS…LVLQFELRRN (218 aa)). Asn-43, Asn-102, and Asn-145 each carry an N-linked (GlcNAc...) asparagine glycan. A disulfide bond links Cys-160 and Cys-174. N-linked (GlcNAc...) asparagine glycosylation is found at Asn-196 and Asn-228. Residues 242-262 (VLYFILETYVPSTFLVVLSWV) form a helical membrane-spanning segment. At 263 to 270 (SFWISLDS) the chain is on the cytoplasmic side. Residues 271-290 (VPARTCIGVTTVLSMTTLMI) form a helical membrane-spanning segment. The Extracellular portion of the chain corresponds to 291 to 301 (GSRTSLPNTNC). A helical transmembrane segment spans residues 302–322 (FIKAIDVYLGICFSFVFGALL). Residues 323–419 (EYAVAHYSSL…NPSNVDRYSK (97 aa)) are Cytoplasmic-facing. Residues 420–440 (LLFPLIFMLANVFYWAYYMYF) form a helical membrane-spanning segment.

It belongs to the ligand-gated ion channel (TC 1.A.9) family. Gamma-aminobutyric acid receptor (TC 1.A.9.5) subfamily. GABRP sub-subfamily. Heteropentamer, formed by a combination of alpha (GABRA1-6), beta (GABRB1-3), gamma (GABRG1-3), delta (GABRD), epsilon (GABRE), rho (GABRR1-3), pi (GABRP) and theta (GABRQ) chains, each subunit exhibiting distinct physiological and pharmacological properties.

Its subcellular location is the cell membrane. The protein localises to the apical cell membrane. It carries out the reaction chloride(in) = chloride(out). Its function is as follows. Pi subunit of the heteropentameric ligand-gated chloride channel gated by gamma-aminobutyric acid (GABA). GABA-gated chloride channels, also named GABA(A) receptors (GABAAR), consist of five subunits arranged around a central pore and contain GABA active binding site(s) located at the alpha and beta subunit interfaces. When activated by GABA, GABAARs selectively allow the flow of chloride anions across the cell membrane down their electrochemical gradient. Pi-containing GABAARs are mostly located in peripheral tissues. In the uterus, pi subunits modulate uterus contraction by altering the sensitivity of GABAARs to pregnanolone. In the lungs, pi-containing GABAARs contribute to pulmonary fluid transport via luminal secretion of chloride. In Mus musculus (Mouse), this protein is Gamma-aminobutyric acid receptor subunit pi.